Here is a 332-residue protein sequence, read N- to C-terminus: Receptor polysaccharide phosphotransferase WefC (332 aa).

This sequence belongs to the stealth family.

The chain is Receptor polysaccharide phosphotransferase WefC (wefC) from Streptococcus oralis.